The primary structure comprises 207 residues: Succinyl-CoA:3-ketoacid coenzyme A transferase subunit B (207 aa).

Glu43 is a catalytic residue.

Belongs to the 3-oxoacid CoA-transferase subunit B family. As to quaternary structure, heterodimer of a subunit A and a subunit B.

It catalyses the reaction a 3-oxo acid + succinyl-CoA = a 3-oxoacyl-CoA + succinate. This Helicobacter pylori (strain ATCC 700392 / 26695) (Campylobacter pylori) protein is Succinyl-CoA:3-ketoacid coenzyme A transferase subunit B (scoB).